The primary structure comprises 884 residues: Receptor-like protein 39 (884 aa).

A signal peptide spans 1–24 (MSELLFRLNFLLLLLLSCVSLASS). Residues 25–847 (FFSFNDPVVG…EEEEQVLNWK (823 aa)) are Extracellular-facing. N-linked (GlcNAc...) asparagine glycosylation is found at N59, N71, and N92. LRR repeat units follow at residues 98–122 (FHQLRHLYLSYNNFTPSSIPSEFGM), 124–146 (NKLEVLFMSTGGFLGQVPSSFSN), 147–170 (LSMLSALLLHHNELTGSLSFVRNL), 171–196 (RKLTILDVSHNHFSGTLNPNSSLFEL), 197–223 (HNLAYLDLGSNNFTSSSLPYEFGNLNK), 225–245 (ELLDVSSNSFFGQVPPTISNL), 246–268 (TQLTELYLPLNDFTGSLPLVQNL), 269–292 (TKLSILHLSDNHFSGTIPSSLFTM), 294–318 (FLSYLDLGGNNLSGSIEVPNSSLSS), and 320–344 (LENLNLGENHFEGKIIEPISKLINL). Residue N146 is glycosylated (N-linked (GlcNAc...) asparagine). N190, N208, N244, and N267 each carry an N-linked (GlcNAc...) asparagine glycan. N-linked (GlcNAc...) asparagine glycans are attached at residues N304 and N313. The stretch at 345 to 365 (KELHLSFLNTSYPINLKLFSS) is one LRR 11; degenerate repeat. N353 carries N-linked (GlcNAc...) asparagine glycosylation. LRR repeat units lie at residues 366 to 391 (LKYLLLLDLSGGWISQASLSLDSYIP), 392 to 413 (STLEALLLKHCNISVFPNILKT), 414 to 438 (LPNLEFIALSTNKISGKIPEWLWSL), 440 to 463 (RLSSVFIEENLFTGFEGSSEILVN), and 464 to 487 (SSVRILNLLSNNLEGALPHLPLSV). N403 carries N-linked (GlcNAc...) asparagine glycosylation. N463 carries N-linked (GlcNAc...) asparagine glycosylation. The stretch at 488 to 507 (NYFSARNNRYGGDIPLSICS) is one LRR 17; degenerate repeat. 10 LRR repeats span residues 508-529 (RRSLVFLDLSYNNFTGPIPPCP), 530-553 (SNFLILNLRKNNLEGSIPDTYYAD), 554-577 (APLRSLDVGYNRLTGKLPRSLLNC), 579-601 (ALQFLSVDHNGIKDTFPFSLKAL), 602-625 (PKLQVLILHSNNFYGPLSPPNQGS), 628-652 (FPELRILEIAGNKFTGSLPPDFFEN), 702-725 (SSSATIDFSGNRLEGEIPESIGLL), 726-749 (KALIALNLSNNAFTGHIPLSLANL), 750-773 (KKIESLDLSSNQLSGTIPNGIGTL), and 775-798 (FLAYMNVSHNQLNGEIPQGTQITG). A glycan (N-linked (GlcNAc...) asparagine) is linked at N520. An N-linked (GlcNAc...) asparagine glycan is attached at N576. A glycan (N-linked (GlcNAc...) asparagine) is linked at N732. The N-linked (GlcNAc...) asparagine glycan is linked to N780. Residues 848–868 (GVGIGYGVGVLLGLAIAQLIA) form a helical membrane-spanning segment. Residues 869-884 (SYKPEWLVFLFQSRNH) lie on the Cytoplasmic side of the membrane.

Belongs to the RLP family.

Its subcellular location is the cell membrane. The protein is Receptor-like protein 39 of Arabidopsis thaliana (Mouse-ear cress).